The sequence spans 187 residues: Ubiquinol-cytochrome c reductase iron-sulfur subunit (187 aa).

The helical transmembrane segment at 15–35 (LYYATAGAGAVATGAAVWPLI) threads the bilayer. Positions 89 to 185 (QLGQLVDTNA…AKFIDETTIQ (97 aa)) constitute a Rieske domain. Residues C129, H131, C149, and H152 each coordinate [2Fe-2S] cluster. The cysteines at positions 134 and 151 are disulfide-linked.

This sequence belongs to the Rieske iron-sulfur protein family. The main subunits of complex b-c1 are: cytochrome b, cytochrome c1 and the Rieske protein. Requires [2Fe-2S] cluster as cofactor.

Its subcellular location is the cell membrane. It carries out the reaction a quinol + 2 Fe(III)-[cytochrome c](out) = a quinone + 2 Fe(II)-[cytochrome c](out) + 2 H(+)(out). Its function is as follows. Component of the ubiquinol-cytochrome c reductase complex (complex III or cytochrome b-c1 complex), which is a respiratory chain that generates an electrochemical potential coupled to ATP synthesis. The sequence is that of Ubiquinol-cytochrome c reductase iron-sulfur subunit (petA) from Cereibacter sphaeroides (Rhodobacter sphaeroides).